The following is a 573-amino-acid chain: Proton-coupled zinc antiporter SLC30A9, mitochondrial (573 aa).

The interval 66–108 is disordered; the sequence is NCSTSGSGKDGSPTRPEEPKTTEKAQAAQPAAKGAGSKPQGLT. Over residues 90–104 the composition is skewed to low complexity; the sequence is AQAAQPAAKGAGSKP. Helical transmembrane passes span 244 to 264, 319 to 339, 347 to 367, 397 to 417, and 429 to 449; these read VVMV…LAWV, GVGI…MGLL, LLWA…TLLV, VVLL…GCMG, and SLGS…LIYT. Positions 467–471 match the LXXLL motif motif; sequence LTEFL.

This sequence belongs to the cation diffusion facilitator (CDF) transporter (TC 2.A.4) family. SLC30A subfamily.

Its subcellular location is the mitochondrion membrane. The protein resides in the nucleus. It localises to the endoplasmic reticulum. It catalyses the reaction Zn(2+)(in) + 2 H(+)(out) = Zn(2+)(out) + 2 H(+)(in). In terms of biological role, mitochondrial proton-coupled zinc ion antiporter mediating the export of zinc from the mitochondria and involved in zinc homeostasis, zinc mobilization as well as mitochondrial morphology and health. In nucleus, may function as a secondary coactivator for nuclear receptors. The polypeptide is Proton-coupled zinc antiporter SLC30A9, mitochondrial (slc30a9) (Danio rerio (Zebrafish)).